The sequence spans 624 residues: Adenine deaminase 1 (624 aa).

The protein belongs to the metallo-dependent hydrolases superfamily. Adenine deaminase family. Mn(2+) is required as a cofactor.

The catalysed reaction is adenine + H2O + H(+) = hypoxanthine + NH4(+). The polypeptide is Adenine deaminase 1 (Bradyrhizobium sp. (strain ORS 278)).